The sequence spans 456 residues: Methylenetetrahydrofolate--tRNA-(uracil-5-)-methyltransferase TrmFO (456 aa).

FAD is bound at residue 11 to 16; it reads GGGLAG.

This sequence belongs to the MnmG family. TrmFO subfamily. Requires FAD as cofactor.

It is found in the cytoplasm. The enzyme catalyses uridine(54) in tRNA + (6R)-5,10-methylene-5,6,7,8-tetrahydrofolate + NADH + H(+) = 5-methyluridine(54) in tRNA + (6S)-5,6,7,8-tetrahydrofolate + NAD(+). The catalysed reaction is uridine(54) in tRNA + (6R)-5,10-methylene-5,6,7,8-tetrahydrofolate + NADPH + H(+) = 5-methyluridine(54) in tRNA + (6S)-5,6,7,8-tetrahydrofolate + NADP(+). Catalyzes the folate-dependent formation of 5-methyl-uridine at position 54 (M-5-U54) in all tRNAs. In Synechocystis sp. (strain ATCC 27184 / PCC 6803 / Kazusa), this protein is Methylenetetrahydrofolate--tRNA-(uracil-5-)-methyltransferase TrmFO.